Here is a 379-residue protein sequence, read N- to C-terminus: MSGELKRGLEGVLVAESKLSFIDGDAGQLVYCGYDIEDLARDASYEEVLYLLWHGALPTGEELDAFSDELAAHRDLDDGVLDVARELAEQDESPMAALRTLVSAMSAYDESADFEDVTDREVNLEKAKRITAKMPSVLAAYARFRRGDDYVEPDESLNHAANFLYMLNGEEPNEVLAETFDMALVLHADHGLNASTFSAMVTSSTLSDLYSAVTSAIGTLSGSLHGGANANVMRMLKDVDDSDMDPTEWVKDALDRGERVAGFGHRVYNVKDPRAKILGAKSEALGEAAGDMKWYEMSVAIEEYIGEEKGLAPNVDFYSASTYYQMGIPIDLYTPIFAVSRAGGWIAHVLEQYEDNRLIRPRARYTGEKDLDFTPVDER.

Catalysis depends on residues histidine 225, histidine 265, and aspartate 316.

The protein belongs to the citrate synthase family. In terms of assembly, homodimer.

It catalyses the reaction oxaloacetate + acetyl-CoA + H2O = citrate + CoA + H(+). Its pathway is carbohydrate metabolism; tricarboxylic acid cycle; isocitrate from oxaloacetate: step 1/2. Its function is as follows. Might regulate the synthesis and function of enzymes involved in later enzymatic steps of Krebs cycle. The chain is Citrate synthase (citZ) from Haloferax volcanii (strain ATCC 29605 / DSM 3757 / JCM 8879 / NBRC 14742 / NCIMB 2012 / VKM B-1768 / DS2) (Halobacterium volcanii).